The primary structure comprises 791 residues: ABC multidrug transporter mdr2 (791 aa).

Residue Asn147 is glycosylated (N-linked (GlcNAc...) asparagine). The next 2 membrane-spanning stretches (helical) occupy residues 182–202 and 220–240; these read ALAF…PFSI and LFGL…TLGA. Residues 182 to 471 form the ABC transmembrane type-1 domain; it reads ALAFLFLLVS…LSSFYSELMK (290 aa). Residue Asn303 is glycosylated (N-linked (GlcNAc...) asparagine). 2 consecutive transmembrane segments (helical) span residues 307–324 and 326–346; these read GLRA…MAYV and LKLS…AFFY. N-linked (GlcNAc...) asparagine glycans are attached at residues Asn352 and Asn421. A run of 2 helical transmembrane segments spans residues 422-442 and 445-465; these read MTIL…AITI and LTSF…LSSF. The ABC transporter domain maps to 504–741; that stretch reads IRFENVTFSY…PDGAFTKLME (238 aa). N-linked (GlcNAc...) asparagine glycosylation is present at Asn508. 539–546 is a binding site for ATP; that stretch reads GPSGGGKS. Asn692 carries N-linked (GlcNAc...) asparagine glycosylation. The segment covering 754–769 has biased composition (polar residues); it reads ANTPANPVAQETSWDL. The tract at residues 754 to 791 is disordered; it reads ANTPANPVAQETSWDLQSDDGTEISEDTNIPSEPRTID. Residues 770 to 779 are compositionally biased toward acidic residues; the sequence is QSDDGTEISE.

Belongs to the ABC transporter superfamily. ABCB family. Mitochondrial peptide exporter (TC 3.A.1.212) subfamily.

The protein resides in the cell membrane. Pleiotropic ABC efflux transporter that may be involved in A.fumigatus adaptation to azoles. This is ABC multidrug transporter mdr2 from Aspergillus fumigatus (strain ATCC MYA-4609 / CBS 101355 / FGSC A1100 / Af293) (Neosartorya fumigata).